Here is a 171-residue protein sequence, read N- to C-terminus: S-ribosylhomocysteine lyase (171 aa).

Residues His54, His58, and Cys128 each coordinate Fe cation.

It belongs to the LuxS family. Homodimer. Fe cation is required as a cofactor.

The enzyme catalyses S-(5-deoxy-D-ribos-5-yl)-L-homocysteine = (S)-4,5-dihydroxypentane-2,3-dione + L-homocysteine. Its function is as follows. Involved in the synthesis of autoinducer 2 (AI-2) which is secreted by bacteria and is used to communicate both the cell density and the metabolic potential of the environment. The regulation of gene expression in response to changes in cell density is called quorum sensing. Catalyzes the transformation of S-ribosylhomocysteine (RHC) to homocysteine (HC) and 4,5-dihydroxy-2,3-pentadione (DPD). This Shigella flexneri protein is S-ribosylhomocysteine lyase.